The primary structure comprises 448 residues: UDP-N-acetylmuramoylalanine--D-glutamate ligase (448 aa).

G112–T118 serves as a coordination point for ATP.

This sequence belongs to the MurCDEF family.

The protein resides in the cytoplasm. The catalysed reaction is UDP-N-acetyl-alpha-D-muramoyl-L-alanine + D-glutamate + ATP = UDP-N-acetyl-alpha-D-muramoyl-L-alanyl-D-glutamate + ADP + phosphate + H(+). The protein operates within cell wall biogenesis; peptidoglycan biosynthesis. Its function is as follows. Cell wall formation. Catalyzes the addition of glutamate to the nucleotide precursor UDP-N-acetylmuramoyl-L-alanine (UMA). In Acinetobacter baylyi (strain ATCC 33305 / BD413 / ADP1), this protein is UDP-N-acetylmuramoylalanine--D-glutamate ligase.